Reading from the N-terminus, the 940-residue chain is BTB/POZ domain-containing protein FBL11 (940 aa).

In terms of domain architecture, BTB spans 41 to 109 (WDMSEILSYG…LYGYDIEITS (69 aa)). Residues 155 to 258 (IQIWSFGLEH…FSLLPLWFIA (104 aa)) form the BACK domain.

Its pathway is protein modification; protein ubiquitination. Its function is as follows. May act as a substrate-specific adapter of an E3 ubiquitin-protein ligase complex (CUL3-RBX1-BTB) which mediates the ubiquitination and subsequent proteasomal degradation of target proteins. The sequence is that of BTB/POZ domain-containing protein FBL11 (FBL11) from Arabidopsis thaliana (Mouse-ear cress).